A 52-amino-acid chain; its full sequence is Movement protein TGBp3 (52 aa).

Residues 1–3 (MHE) lie on the Lumenal side of the membrane. The helical transmembrane segment at 4-21 (SHLVVILALLLLALWCLS) threads the bilayer. Topologically, residues 22 to 52 (TRPVQPSCHVEINGHSIIVTGNCWHSTQRPH) are cytoplasmic.

Belongs to the Tymovirales TGBp3 protein family.

Its subcellular location is the host endoplasmic reticulum membrane. Plays a role in viral cell-to-cell propagation, by facilitating genome transport to neighboring plant cells through plasmosdesmata. May induce the formation of granular vesicles derived from the Endoplasmic reticulum, which align on actin filaments. The sequence is that of Movement protein TGBp3 from Foxtail mosaic virus.